Here is a 501-residue protein sequence, read N- to C-terminus: Aromatase 3 (501 aa).

Cys-435 is a heme binding site.

This sequence belongs to the cytochrome P450 family. It depends on heme as a cofactor. Ovary.

It localises to the membrane. It catalyses the reaction testosterone + 3 reduced [NADPH--hemoprotein reductase] + 3 O2 = 17beta-estradiol + formate + 3 oxidized [NADPH--hemoprotein reductase] + 4 H2O + 4 H(+). It carries out the reaction androst-4-ene-3,17-dione + 3 reduced [NADPH--hemoprotein reductase] + 3 O2 = estrone + formate + 3 oxidized [NADPH--hemoprotein reductase] + 4 H2O + 4 H(+). In terms of biological role, catalyzes the formation of aromatic C18 estrogens from C19 androgens. In Sus scrofa (Pig), this protein is Aromatase 3 (CYP19A3).